Consider the following 228-residue polypeptide: Superoxide dismutase [Mn], mitochondrial (228 aa).

The transit peptide at 1–24 (MALRTLVSRRTLATGLGFRQQLRG) directs the protein to the mitochondrion. Positions 52, 100, 189, and 193 each coordinate Mn(2+).

It belongs to the iron/manganese superoxide dismutase family. Homotetramer. It depends on Mn(2+) as a cofactor. Expressed most abundantly in parts of the plant which exhibit a high metabolic activity. Expressed in pre-shooting flower buds, vegetative buds, immature fruits and fully expanded leaves of basal shoots and seedlings.

It localises to the mitochondrion matrix. It catalyses the reaction 2 superoxide + 2 H(+) = H2O2 + O2. Its function is as follows. Destroys superoxide anion radicals which are normally produced within the cells and which are toxic to biological systems. The protein is Superoxide dismutase [Mn], mitochondrial (SOD) of Prunus persica (Peach).